Here is a 249-residue protein sequence, read N- to C-terminus: tRNA pseudouridine synthase A (249 aa).

D53 (nucleophile) is an active-site residue. Position 111 (Y111) interacts with substrate.

It belongs to the tRNA pseudouridine synthase TruA family. Homodimer.

The catalysed reaction is uridine(38/39/40) in tRNA = pseudouridine(38/39/40) in tRNA. Functionally, formation of pseudouridine at positions 38, 39 and 40 in the anticodon stem and loop of transfer RNAs. In Streptococcus gordonii (strain Challis / ATCC 35105 / BCRC 15272 / CH1 / DL1 / V288), this protein is tRNA pseudouridine synthase A.